The primary structure comprises 432 residues: NADH-quinone oxidoreductase subunit D (432 aa).

Belongs to the complex I 49 kDa subunit family. As to quaternary structure, NDH-1 is composed of 14 different subunits. Subunits NuoB, C, D, E, F, and G constitute the peripheral sector of the complex.

The protein resides in the cell membrane. It catalyses the reaction a quinone + NADH + 5 H(+)(in) = a quinol + NAD(+) + 4 H(+)(out). Its function is as follows. NDH-1 shuttles electrons from NADH, via FMN and iron-sulfur (Fe-S) centers, to quinones in the respiratory chain. The immediate electron acceptor for the enzyme in this species is believed to be a menaquinone. Couples the redox reaction to proton translocation (for every two electrons transferred, four hydrogen ions are translocated across the cytoplasmic membrane), and thus conserves the redox energy in a proton gradient. The protein is NADH-quinone oxidoreductase subunit D of Mycobacteroides abscessus (strain ATCC 19977 / DSM 44196 / CCUG 20993 / CIP 104536 / JCM 13569 / NCTC 13031 / TMC 1543 / L948) (Mycobacterium abscessus).